The following is a 194-amino-acid chain: Orotate phosphoribosyltransferase (194 aa).

117-125 serves as a coordination point for 5-phospho-alpha-D-ribose 1-diphosphate; it reads EDIVTTGLS. Orotate is bound by residues Thr121 and Arg149.

It belongs to the purine/pyrimidine phosphoribosyltransferase family. PyrE subfamily. Homodimer. It depends on Mg(2+) as a cofactor.

The enzyme catalyses orotidine 5'-phosphate + diphosphate = orotate + 5-phospho-alpha-D-ribose 1-diphosphate. Its pathway is pyrimidine metabolism; UMP biosynthesis via de novo pathway; UMP from orotate: step 1/2. In terms of biological role, catalyzes the transfer of a ribosyl phosphate group from 5-phosphoribose 1-diphosphate to orotate, leading to the formation of orotidine monophosphate (OMP). The polypeptide is Orotate phosphoribosyltransferase (Parvibaculum lavamentivorans (strain DS-1 / DSM 13023 / NCIMB 13966)).